Reading from the N-terminus, the 606-residue chain is RUN and FYVE domain-containing protein 2 (606 aa).

The region spanning 37 to 169 (DSDYPPLQQF…IDANLCVKGE (133 aa)) is the RUN domain. Residues 210–534 (EELNRQLNST…IKEANKALQG (325 aa)) are a coiled coil. An FYVE-type zinc finger spans residues 540–598 (DKEATHCKLCEKEFSLSKRKHHCRNCGEIFCNACSDNELPLPSSPKPVRVCDSCHALLI). Zn(2+) is bound by residues Cys-546, Cys-549, Cys-562, Cys-565, Cys-570, Cys-573, Cys-590, and Cys-593.

As to quaternary structure, interacts with BMX.

The protein resides in the nucleus. In Pongo abelii (Sumatran orangutan), this protein is RUN and FYVE domain-containing protein 2 (RUFY2).